The following is a 631-amino-acid chain: Phosphomethylpyrimidine synthase (631 aa).

Substrate is bound by residues Asn-231, Met-260, Tyr-289, His-325, 345–347 (SRG), 386–389 (DGLR), and Glu-425. His-429 is a Zn(2+) binding site. Tyr-452 provides a ligand contact to substrate. Residue His-493 participates in Zn(2+) binding. [4Fe-4S] cluster is bound by residues Cys-573, Cys-576, and Cys-581.

Belongs to the ThiC family. As to quaternary structure, homodimer. [4Fe-4S] cluster is required as a cofactor.

It carries out the reaction 5-amino-1-(5-phospho-beta-D-ribosyl)imidazole + S-adenosyl-L-methionine = 4-amino-2-methyl-5-(phosphooxymethyl)pyrimidine + CO + 5'-deoxyadenosine + formate + L-methionine + 3 H(+). It participates in cofactor biosynthesis; thiamine diphosphate biosynthesis. Catalyzes the synthesis of the hydroxymethylpyrimidine phosphate (HMP-P) moiety of thiamine from aminoimidazole ribotide (AIR) in a radical S-adenosyl-L-methionine (SAM)-dependent reaction. This chain is Phosphomethylpyrimidine synthase, found in Acinetobacter baylyi (strain ATCC 33305 / BD413 / ADP1).